Consider the following 374-residue polypeptide: Anhydro-N-acetylmuramic acid kinase (374 aa).

An ATP-binding site is contributed by 9–16; it reads GTSLDGID.

Belongs to the anhydro-N-acetylmuramic acid kinase family.

It catalyses the reaction 1,6-anhydro-N-acetyl-beta-muramate + ATP + H2O = N-acetyl-D-muramate 6-phosphate + ADP + H(+). The protein operates within amino-sugar metabolism; 1,6-anhydro-N-acetylmuramate degradation. It participates in cell wall biogenesis; peptidoglycan recycling. Its function is as follows. Catalyzes the specific phosphorylation of 1,6-anhydro-N-acetylmuramic acid (anhMurNAc) with the simultaneous cleavage of the 1,6-anhydro ring, generating MurNAc-6-P. Is required for the utilization of anhMurNAc either imported from the medium or derived from its own cell wall murein, and thus plays a role in cell wall recycling. The chain is Anhydro-N-acetylmuramic acid kinase from Methylobacterium nodulans (strain LMG 21967 / CNCM I-2342 / ORS 2060).